A 122-amino-acid polypeptide reads, in one-letter code: UPF0102 protein RHE_CH00320 (122 aa).

The protein belongs to the UPF0102 family.

The chain is UPF0102 protein RHE_CH00320 from Rhizobium etli (strain ATCC 51251 / DSM 11541 / JCM 21823 / NBRC 15573 / CFN 42).